The following is a 165-amino-acid chain: Anaphase-promoting complex subunit 11 (165 aa).

The segment at cysteine 52–arginine 95 adopts an RING-type; atypical zinc-finger fold.

As to quaternary structure, the APC/C is composed of at least 13 subunits that stay tightly associated throughout the cell cycle: APC1, APC2, APC4, APC5, APC9, APC11, CDC16, CDC23, CDC26, CDC27, DOC1, MND2 and SWM1.

It participates in protein modification; protein ubiquitination. In terms of biological role, probably catalytic subunit of the anaphase promoting complex/cyclosome (APC/C), a cell cycle-regulated E3 ubiquitin-protein ligase complex that controls progression through mitosis and the G1 phase of the cell cycle. The APC/C is thought to confer substrate specificity and, in the presence of ubiquitin-conjugating E2 enzymes, it catalyzes the formation of protein-ubiquitin conjugates that are subsequently degraded by the 26S proteasome. In early mitosis, the APC/C is activated by CDC20 and targets securin PDS1, the B-type cyclin CLB5, and other anaphase inhibitory proteins for proteolysis, thereby triggering the separation of sister chromatids at the metaphase-to-anaphase transition. In late mitosis and in G1, degradation of CLB5 allows activation of the APC/C by CDH1, which is needed to destroy CDC20 and the B-type cyclin CLB2 to allow exit from mitosis and creating the low CDK state necessary for cytokinesis and for reforming prereplicative complexes in G1 prior to another round of replication. APC11 is required to recruit the ubiquitin-conjugating enzyme E2 to the APC/C. This is Anaphase-promoting complex subunit 11 (APC11) from Saccharomyces cerevisiae (strain ATCC 204508 / S288c) (Baker's yeast).